A 210-amino-acid chain; its full sequence is Cytochrome c biogenesis ATP-binding export protein CcmA (210 aa).

An ABC transporter domain is found at 3–209; the sequence is LTVTNLACAR…PADDPFAGVT (207 aa). Position 35 to 42 (35 to 42) interacts with ATP; that stretch reads GPNGIGKT.

This sequence belongs to the ABC transporter superfamily. CcmA exporter (TC 3.A.1.107) family. As to quaternary structure, the complex is composed of two ATP-binding proteins (CcmA) and two transmembrane proteins (CcmB).

Its subcellular location is the cell inner membrane. The enzyme catalyses heme b(in) + ATP + H2O = heme b(out) + ADP + phosphate + H(+). Functionally, part of the ABC transporter complex CcmAB involved in the biogenesis of c-type cytochromes; once thought to export heme, this seems not to be the case, but its exact role is uncertain. Responsible for energy coupling to the transport system. The sequence is that of Cytochrome c biogenesis ATP-binding export protein CcmA from Cereibacter sphaeroides (strain ATCC 17023 / DSM 158 / JCM 6121 / CCUG 31486 / LMG 2827 / NBRC 12203 / NCIMB 8253 / ATH 2.4.1.) (Rhodobacter sphaeroides).